The primary structure comprises 211 residues: MAGGKIPIVGIVACLQPEMGIGFRGGLPWRLPSEMKYFRQVTSLTKDPNKKNALIMGRKTWESIPPKFRPLPNRMNVIISRSFKDDFVHDKERSIVQSNSLANAIMNLESNFKEHLERIYVIGGGEVYSQIFSITDHWLITKINPLDKNATPAMDTFLDAKKLEEVFSEQDPAQLKEFLPPKVELPETDCDQRYSLEEKGYCFEFTLYNRK.

Positions 7–210 (PIVGIVACLQ…YCFEFTLYNR (204 aa)) constitute a DHFR domain. NADP(+)-binding positions include Ala13 and 20-26 (GIGFRGG). Residue 34-39 (EMKYFR) participates in substrate binding. An NADP(+)-binding site is contributed by 58-60 (RKT). Arg74 is a substrate binding site. Residues 80-82 (SRS) and 123-130 (GGGEVYSQ) contribute to the NADP(+) site.

The protein belongs to the dihydrofolate reductase family.

It carries out the reaction (6S)-5,6,7,8-tetrahydrofolate + NADP(+) = 7,8-dihydrofolate + NADPH + H(+). The protein operates within cofactor biosynthesis; tetrahydrofolate biosynthesis; 5,6,7,8-tetrahydrofolate from 7,8-dihydrofolate: step 1/1. In terms of biological role, key enzyme in folate metabolism. Catalyzes an essential reaction for de novo glycine and purine synthesis, and for DNA precursor synthesis. The protein is Dihydrofolate reductase (DFR1) of Saccharomyces cerevisiae (strain ATCC 204508 / S288c) (Baker's yeast).